Consider the following 158-residue polypeptide: Vasotocin-neurophysin VT 2 (158 aa).

The signal sequence occupies residues 1–19; sequence MPHSTLLLCVIGLLAFSSA. Cysteine 20 and cysteine 25 are joined by a disulfide. Glycine 28 is modified (glycine amide). Cystine bridges form between cysteine 41–cysteine 85, cysteine 44–cysteine 58, cysteine 52–cysteine 75, cysteine 59–cysteine 65, cysteine 92–cysteine 105, cysteine 99–cysteine 117, and cysteine 106–cysteine 111.

It belongs to the vasopressin/oxytocin family. In terms of processing, seven disulfide bonds are present in neurophysin.

The protein localises to the secreted. Vasotocin is an antidiuretic hormone. This is Vasotocin-neurophysin VT 2 from Oncorhynchus keta (Chum salmon).